The sequence spans 549 residues: Glucose-6-phosphate isomerase (549 aa).

Glu353 functions as the Proton donor in the catalytic mechanism. Catalysis depends on residues His384 and Lys513.

Belongs to the GPI family.

The protein localises to the cytoplasm. The enzyme catalyses alpha-D-glucose 6-phosphate = beta-D-fructose 6-phosphate. It functions in the pathway carbohydrate biosynthesis; gluconeogenesis. Its pathway is carbohydrate degradation; glycolysis; D-glyceraldehyde 3-phosphate and glycerone phosphate from D-glucose: step 2/4. Its function is as follows. Catalyzes the reversible isomerization of glucose-6-phosphate to fructose-6-phosphate. In Brucella suis (strain ATCC 23445 / NCTC 10510), this protein is Glucose-6-phosphate isomerase.